The chain runs to 89 residues: Small ribosomal subunit protein uS15 (89 aa).

This sequence belongs to the universal ribosomal protein uS15 family. As to quaternary structure, part of the 30S ribosomal subunit. Forms a bridge to the 50S subunit in the 70S ribosome, contacting the 23S rRNA.

In terms of biological role, one of the primary rRNA binding proteins, it binds directly to 16S rRNA where it helps nucleate assembly of the platform of the 30S subunit by binding and bridging several RNA helices of the 16S rRNA. Functionally, forms an intersubunit bridge (bridge B4) with the 23S rRNA of the 50S subunit in the ribosome. The protein is Small ribosomal subunit protein uS15 of Blochmanniella pennsylvanica (strain BPEN).